Here is a 211-residue protein sequence, read N- to C-terminus: Thymidylate kinase (211 aa).

Glycine 12 to serine 19 provides a ligand contact to ATP.

The protein belongs to the thymidylate kinase family.

The enzyme catalyses dTMP + ATP = dTDP + ADP. Functionally, phosphorylation of dTMP to form dTDP in both de novo and salvage pathways of dTTP synthesis. The sequence is that of Thymidylate kinase from Ruegeria pomeroyi (strain ATCC 700808 / DSM 15171 / DSS-3) (Silicibacter pomeroyi).